The sequence spans 36 residues: Photosystem I reaction center subunit VIII (36 aa).

A helical transmembrane segment spans residues 9–29 (ILVPLVGLIFPAFSMALFFLY).

It belongs to the PsaI family.

It localises to the plastid. The protein localises to the chloroplast thylakoid membrane. Its function is as follows. May help in the organization of the PsaL subunit. The protein is Photosystem I reaction center subunit VIII of Thalassiosira pseudonana (Marine diatom).